We begin with the raw amino-acid sequence, 294 residues long: Probable endonuclease 4 (294 aa).

Histidine 71, histidine 111, glutamate 148, aspartate 182, histidine 185, histidine 217, aspartate 230, histidine 232, and glutamate 262 together coordinate Zn(2+).

This sequence belongs to the AP endonuclease 2 family. Requires Zn(2+) as cofactor.

The catalysed reaction is Endonucleolytic cleavage to 5'-phosphooligonucleotide end-products.. Endonuclease IV plays a role in DNA repair. It cleaves phosphodiester bonds at apurinic or apyrimidinic (AP) sites, generating a 3'-hydroxyl group and a 5'-terminal sugar phosphate. This Acholeplasma laidlawii (strain PG-8A) protein is Probable endonuclease 4.